We begin with the raw amino-acid sequence, 216 residues long: MPGITLGDTVPNLEVETTHDKFKLHDYFANSWTVLFSHPGDFTPVCTTELGAMAKYAHEFDKRGVKLLGLSCDDVQSHKDWIKDIEAFNHGSKVNYPIIADPNKEIIPQLNMIDPIENGPSRALHIVGPDSKIKLSFLYPSTTGRNMDEVLRALDSLLMASKHNNKIATPVNWKPDQPVVISPAVSDEEAKKMFPQGFKTADLPSKKGYLRHTEVS.

Positions I4–M159 constitute a Thioredoxin domain. The active-site Cysteine sulfenic acid (-SOH) intermediate is C46. Residues K191–E214 carry the Bipartite nuclear localization signal motif.

It belongs to the peroxiredoxin family. Prx6 subfamily. In terms of tissue distribution, predominantly expressed in seed. Expressed in endosperm, embryo and aleurone cells. Also detected in young seedlings, abscission zones, stem branching points.

The protein resides in the nucleus. The protein localises to the cytoplasm. It carries out the reaction a hydroperoxide + [thioredoxin]-dithiol = an alcohol + [thioredoxin]-disulfide + H2O. In terms of biological role, thiol-specific peroxidase that catalyzes the reduction of hydrogen peroxide and organic hydroperoxides to water and alcohols, respectively. Seems to contribute to the inhibition of germination during stress. The chain is 1-Cys peroxiredoxin PER1 (PER1) from Arabidopsis thaliana (Mouse-ear cress).